The sequence spans 68 residues: Elastase inhibitor AFLEI (68 aa).

Cys-5 and Cys-67 are oxidised to a cystine.

The protein localises to the secreted. In terms of biological role, elastase inhibitor. Inhibitor of A.flavus elastase with a Ki of 40 nM. Inhibitor of A.fumigatus elastase and human leukocyte elastase. Inhibits the fibrinogenase and collagenase activities of A.flavus elastase. Does not inhibit porcine pancreatic elastase, trypsin, chymotrypsin, thrombin or A.acutus AC1-proteinase. This chain is Elastase inhibitor AFLEI, found in Aspergillus flavus.